We begin with the raw amino-acid sequence, 211 residues long: Urease accessory protein UreG (211 aa).

11-18 contributes to the GTP binding site; sequence GPVGAGKT.

The protein belongs to the SIMIBI class G3E GTPase family. UreG subfamily. Homodimer. UreD, UreF and UreG form a complex that acts as a GTP-hydrolysis-dependent molecular chaperone, activating the urease apoprotein by helping to assemble the nickel containing metallocenter of UreC. The UreE protein probably delivers the nickel.

It is found in the cytoplasm. Facilitates the functional incorporation of the urease nickel metallocenter. This process requires GTP hydrolysis, probably effectuated by UreG. This Actinobacillus pleuropneumoniae serotype 5b (strain L20) protein is Urease accessory protein UreG.